We begin with the raw amino-acid sequence, 437 residues long: MHPQREVIKFRKGRFYKNPTISSFKRIVPSNRPVAVDVNGFPQRHRRHYVQAGMFANAKSSLPSSANVSFQNSDDNLSTSRGRSASPTPIRKFSNFPRSNISKTWDFSDIGVKKDQQTRNQLPPMKRLNSEEEEEQQGKTKTTKKETIGASTVGRSVKHVLPWLKKWGSQDAESNMKPMRIERLKVSPTLDQSINRFSSRLRRIDSIRPIPLQNHTGTTIGTVEKALVAVALAKTKSEEYQKNPVFDYLIERSDWLLYREEFNDKIDYLPQDPFYSHDIVSSDFEEYEQEIEEARDPYYLEIGSEEKQAPIKASASKPRFDEANFHNEDPLNLDSQEDFFETSYLPKNADESKKHQKSMLPSFGDYTTKSDDERQKNRLVSFDTDSSVPRTSRKRNHQEALSPSKSNPDYSPFNYDLFSPPSVPKKPSSSSSNYSIW.

The segment covering 63–87 (PSSANVSFQNSDDNLSTSRGRSASP) has biased composition (polar residues). Disordered regions lie at residues 63–97 (PSSANVSFQNSDDNLSTSRGRSASPTPIRKFSNFP), 112–147 (VKKDQQTRNQLPPMKRLNSEEEEEQQGKTKTTKKET), and 346–437 (PKNA…YSIW). Positions 399 to 409 (EALSPSKSNPD) are enriched in polar residues. A compositionally biased stretch (low complexity) spans 425–437 (KKPSSSSSNYSIW).

This is an uncharacterized protein from Caenorhabditis elegans.